Consider the following 276-residue polypeptide: Sulfur carrier protein FdhD (276 aa).

C118 serves as the catalytic Cysteine persulfide intermediate.

It belongs to the FdhD family.

It localises to the cytoplasm. Its function is as follows. Required for formate dehydrogenase (FDH) activity. Acts as a sulfur carrier protein that transfers sulfur from IscS to the molybdenum cofactor prior to its insertion into FDH. The sequence is that of Sulfur carrier protein FdhD from Mycobacterium bovis (strain ATCC BAA-935 / AF2122/97).